The sequence spans 683 residues: DNA ligase (683 aa).

NAD(+) is bound by residues 35–39 (DTEYD), 84–85 (SL), and E116. The active-site N6-AMP-lysine intermediate is the K118. R139, E176, K293, and K317 together coordinate NAD(+). Zn(2+)-binding residues include C419, C422, C437, and C443. The BRCT domain occupies 602–683 (AGPQLLAGKT…LMKLLAKGVE (82 aa)).

This sequence belongs to the NAD-dependent DNA ligase family. LigA subfamily. Mg(2+) serves as cofactor. It depends on Mn(2+) as a cofactor.

The enzyme catalyses NAD(+) + (deoxyribonucleotide)n-3'-hydroxyl + 5'-phospho-(deoxyribonucleotide)m = (deoxyribonucleotide)n+m + AMP + beta-nicotinamide D-nucleotide.. DNA ligase that catalyzes the formation of phosphodiester linkages between 5'-phosphoryl and 3'-hydroxyl groups in double-stranded DNA using NAD as a coenzyme and as the energy source for the reaction. It is essential for DNA replication and repair of damaged DNA. This Dechloromonas aromatica (strain RCB) protein is DNA ligase.